A 357-amino-acid chain; its full sequence is uncharacterized protein (357 aa).

This is an uncharacterized protein from Mycobacterium bovis (strain ATCC BAA-935 / AF2122/97).